The chain runs to 480 residues: Cysteine--tRNA ligase (480 aa).

A Zn(2+)-binding site is contributed by cysteine 27. Positions 29–39 (PTVYNYAHIGN) match the 'HIGH' region motif. The Zn(2+) site is built by cysteine 221, histidine 246, and glutamate 250. The 'KMSKS' region signature appears at 278 to 282 (KMSKS). Residue lysine 281 participates in ATP binding.

Belongs to the class-I aminoacyl-tRNA synthetase family. Monomer. The cofactor is Zn(2+).

It localises to the cytoplasm. The enzyme catalyses tRNA(Cys) + L-cysteine + ATP = L-cysteinyl-tRNA(Cys) + AMP + diphosphate. The sequence is that of Cysteine--tRNA ligase from Borreliella afzelii (strain PKo) (Borrelia afzelii).